The chain runs to 46 residues: EKGFGFLTQNNGGADVFVHFRAIASEGFKTLTEGQKVSFDVEQGQK.

The 46-residue stretch at 1 to 46 (EKGFGFLTQNNGGADVFVHFRAIASEGFKTLTEGQKVSFDVEQGQK) folds into the CSD domain.

As to quaternary structure, homodimer.

It is found in the cytoplasm. This is Major cold shock protein (cspA) from Photobacterium leiognathi subsp. mandapamensis (Photobacterium mandapamensis).